We begin with the raw amino-acid sequence, 639 residues long: Testicular spindle-associated protein SHCBP1L (639 aa).

Disordered regions lie at residues 1–25 (MESD…EQTV) and 48–75 (VASP…ETCD). The residue at position 3 (Ser-3) is an O-acetylserine. Phosphoserine is present on residues Ser-8, Ser-19, and Ser-50. Over residues 54–63 (VKGKAARRRL) the composition is skewed to basic residues. A coiled-coil region spans residues 285 to 312 (IAQRFKKTLEKYKNKRVELIEYQSNIKE). 4 PbH1 repeats span residues 479–500 (SGHL…CVLT), 501–523 (GASL…ELYP), 524–557 (GSIA…NMKV), and 560–582 (APKL…SILQ). N6-acetyllysine is present on Lys-556. N6-acetyllysine is present on Lys-631.

Interacts with HSPA2; this interaction may promote the recruitment of HSPA2 to the spindle. As to expression, expressed in pachytene spermatocytes and elongating spermatids inside the seminiferous tubules. Not detected in ovary (at protein level). Testis-specific.

The protein resides in the cytoplasm. The protein localises to the cytoskeleton. Its subcellular location is the spindle. Its function is as follows. Testis-specific spindle-associated factor that plays a role in spermatogenesis. In association with HSPA2, participates in the maintenance of spindle integrity during meiosis in male germ cells. In Mus musculus (Mouse), this protein is Testicular spindle-associated protein SHCBP1L.